We begin with the raw amino-acid sequence, 278 residues long: Sulfur carrier protein FdhD (278 aa).

The active-site Cysteine persulfide intermediate is the C124.

It belongs to the FdhD family.

The protein resides in the cytoplasm. Required for formate dehydrogenase (FDH) activity. Acts as a sulfur carrier protein that transfers sulfur from IscS to the molybdenum cofactor prior to its insertion into FDH. In Burkholderia cenocepacia (strain ATCC BAA-245 / DSM 16553 / LMG 16656 / NCTC 13227 / J2315 / CF5610) (Burkholderia cepacia (strain J2315)), this protein is Sulfur carrier protein FdhD.